Reading from the N-terminus, the 358-residue chain is MGSIEAAERTTVGLAAKDPSGILTPYTYTLRNTGPDDVYIKIHYCGVCHSDLHQIKNDLGMSNYPMVPGHEVVGEVLEVGSNVTRFKVGEIVGVGLLVGCCKSCRACDSEIEQYCNKKIWSYNDVYTDGKITQGGFAESTVVEQKFVVKIPEGLAPEQVAPLLCAGVTVYSPLSHFGLKTPGLRGGILGLGGVGHMGVKVAKALGHHVTVISSSDKKKKEALEDLGADNYLVSSDTVGMQEAADSLDYIIDTVPVGHPLEPYLSLLKIDGKLILMGVINTPLQFVTPMVMLGRKSITGSFVGSVKETEEMLEFWKEKGLTSMIEIVTMDYINKAFERLEKNDVRYRFVVDVKGSKFEE.

Cys-48 is a Zn(2+) binding site. Ser-50 contacts NADP(+). His-70, Glu-71, Cys-101, Cys-104, Cys-107, Cys-115, and Cys-164 together coordinate Zn(2+). NADP(+) is bound by residues Thr-168, 189–194 (GLGGVG), 212–217 (SSSDKK), Thr-252, Gly-276, and 299–301 (SFV).

The protein belongs to the zinc-containing alcohol dehydrogenase family. Homodimer. Zn(2+) is required as a cofactor. In terms of tissue distribution, most actively expressed in stem, hypocotyl and root tissue.

It catalyses the reaction (E)-cinnamyl alcohol + NADP(+) = (E)-cinnamaldehyde + NADPH + H(+). The enzyme catalyses (E)-coniferol + NADP(+) = (E)-coniferaldehyde + NADPH + H(+). It carries out the reaction (E)-sinapyl alcohol + NADP(+) = (E)-sinapaldehyde + NADPH + H(+). The catalysed reaction is (E)-4-coumaroyl alcohol + NADP(+) = (E)-4-coumaraldehyde + NADPH + H(+). It catalyses the reaction (E)-caffeyl alcohol + NADP(+) = (E)-caffeyl aldehyde + NADPH + H(+). It participates in aromatic compound metabolism; phenylpropanoid biosynthesis. Functionally, this protein catalyzes the final step in a branch of phenylpropanoid synthesis specific for production of lignin monomers. It acts on coniferyl-, sinapyl-, 4-coumaryl- and cinnamyl-alcohol. This is Probable cinnamyl alcohol dehydrogenase (CAD2) from Medicago sativa (Alfalfa).